The sequence spans 68 residues: Serine rich endogenous peptide 22 (68 aa).

An N-terminal signal peptide occupies residues Met-1–Ala-25. Residues Lys-50–Ala-64 carry the SCOOP motif motif. Positions Ser-56–Ser-58 match the SxS motif essential for MIK2 binding motif.

The protein belongs to the serine rich endogenous peptide (SCOOP) phytocytokine family. As to quaternary structure, interacts with MIK2 (via extracellular leucine-rich repeat domain); this interaction triggers the formation of complex between MIK2 and the BAK1/SERK3 and SERK4 coreceptors, and subsequent BAK1 activation by phosphorylation.

The protein resides in the cell membrane. It is found in the secreted. The protein localises to the extracellular space. Its subcellular location is the apoplast. Its function is as follows. Brassicaceae-specific phytocytokine (plant endogenous peptide released into the apoplast) perceived by MIK2 in a BAK1/SERK3 and SERK4 coreceptors-dependent manner, that modulates various physiological and antimicrobial processes including growth prevention and reactive oxygen species (ROS) response regulation. The protein is Serine rich endogenous peptide 22 of Arabidopsis thaliana (Mouse-ear cress).